The following is a 306-amino-acid chain: Ribosomal RNA small subunit methyltransferase H (306 aa).

Residues 33–35 (GGY), Asp51, Phe78, Asp96, and Gln103 each bind S-adenosyl-L-methionine.

The protein belongs to the methyltransferase superfamily. RsmH family.

The protein resides in the cytoplasm. The catalysed reaction is cytidine(1402) in 16S rRNA + S-adenosyl-L-methionine = N(4)-methylcytidine(1402) in 16S rRNA + S-adenosyl-L-homocysteine + H(+). Its function is as follows. Specifically methylates the N4 position of cytidine in position 1402 (C1402) of 16S rRNA. This is Ribosomal RNA small subunit methyltransferase H from Rickettsia typhi (strain ATCC VR-144 / Wilmington).